The chain runs to 162 residues: Putative colanic acid biosynthesis acetyltransferase WcaB (162 aa).

It belongs to the transferase hexapeptide repeat family.

The protein operates within slime biogenesis; slime polysaccharide biosynthesis. The protein is Putative colanic acid biosynthesis acetyltransferase WcaB (wcaB) of Escherichia coli O157:H7.